The following is a 292-amino-acid chain: 4-hydroxy-tetrahydrodipicolinate synthase (292 aa).

T45 lines the pyruvate pocket. The Proton donor/acceptor role is filled by Y133. K162 functions as the Schiff-base intermediate with substrate in the catalytic mechanism. Residue I204 participates in pyruvate binding.

It belongs to the DapA family. In terms of assembly, homotetramer; dimer of dimers.

The protein resides in the cytoplasm. The enzyme catalyses L-aspartate 4-semialdehyde + pyruvate = (2S,4S)-4-hydroxy-2,3,4,5-tetrahydrodipicolinate + H2O + H(+). It participates in amino-acid biosynthesis; L-lysine biosynthesis via DAP pathway; (S)-tetrahydrodipicolinate from L-aspartate: step 3/4. Functionally, catalyzes the condensation of (S)-aspartate-beta-semialdehyde [(S)-ASA] and pyruvate to 4-hydroxy-tetrahydrodipicolinate (HTPA). The protein is 4-hydroxy-tetrahydrodipicolinate synthase of Oleidesulfovibrio alaskensis (strain ATCC BAA-1058 / DSM 17464 / G20) (Desulfovibrio alaskensis).